A 461-amino-acid polypeptide reads, in one-letter code: uncharacterized protein (461 aa).

A run of 13 helical transmembrane segments spans residues 13-33, 54-74, 81-101, 120-140, 170-190, 211-231, 256-276, 286-306, 314-334, 349-369, 377-397, 399-419, and 439-459; these read GIIF…LPFE, ALHV…LGLV, VGFA…ATAL, GNLF…SMWM, VFVL…TLVG, YGLP…YIIF, FIIF…NPFI, IASF…STGV, SNTD…SAVL, FMID…FIIF, TASA…LGMP, IGLA…PVAT, and VGFL…YMFW.

It belongs to the SLC13A/DASS transporter (TC 2.A.47) family. NADC subfamily.

It is found in the cell membrane. This is an uncharacterized protein from Haemophilus influenzae (strain ATCC 51907 / DSM 11121 / KW20 / Rd).